Reading from the N-terminus, the 253-residue chain is MEKEAVLTVSDLSLYYSKKKALNTINMTFYKNEITALIGPSGCGKSTLLRSINRMNDLIPTVTITGAIDYKGKNIYSPKVDTVDLRKEIGMVFQQPNPFPFSIYENVVYGLRLKGVKDKALLDEVVENSLKAANIWDEVKDILHSSALGLSGGQQQRVCIARILAVNPEIILMDEPTSALDPISAARVEETMLELKKDYTIAIVTHSMQQASRISDRTAFMLDGNLIEYNDTKSIFLNPEKQETSDYISGKFG.

The ABC transporter domain maps to L7–I248. G39–S46 serves as a coordination point for ATP.

The protein belongs to the ABC transporter superfamily. Phosphate importer (TC 3.A.1.7) family. The complex is composed of two ATP-binding proteins (PstB), two transmembrane proteins (PstC and PstA) and a solute-binding protein (PstS).

The protein localises to the cell membrane. It catalyses the reaction phosphate(out) + ATP + H2O = ADP + 2 phosphate(in) + H(+). Functionally, part of the ABC transporter complex PstSACB involved in phosphate import. Responsible for energy coupling to the transport system. The polypeptide is Phosphate import ATP-binding protein PstB 1 (Lactococcus lactis subsp. lactis (strain IL1403) (Streptococcus lactis)).